Reading from the N-terminus, the 536-residue chain is 3',5'-cyclic-AMP phosphodiesterase 4C (536 aa).

The disordered stretch occupies residues 49–69 (QALLGTPPQSSQQAAPAEESG). Positions 178–507 (VQTDQEEQLA…EWYQSRVPCS (330 aa)) constitute a PDEase domain. The active-site Proton donor is His-254. His-254 provides a ligand contact to 3',5'-cyclic AMP. AMP is bound by residues His-254 and His-258. Zn(2+)-binding residues include His-258, His-294, Asp-295, and Asp-412. Asp-295, Asp-412, Gln-463, and Phe-466 together coordinate AMP. A Mg(2+)-binding site is contributed by Asp-295. Asp-295 serves as a coordination point for Mn(2+). 3',5'-cyclic AMP is bound by residues Gln-463 and Phe-466. Ser-507 bears the Phosphoserine mark.

Belongs to the cyclic nucleotide phosphodiesterase family. PDE4 subfamily. As to quaternary structure, part of a complex containing AKAP5, ADCY5, ADCY6 and PKD2. Requires Zn(2+) as cofactor. Mg(2+) serves as cofactor. The cofactor is Mn(2+).

The protein resides in the cell projection. The protein localises to the cilium. The enzyme catalyses 3',5'-cyclic AMP + H2O = AMP + H(+). The protein operates within purine metabolism; 3',5'-cyclic AMP degradation; AMP from 3',5'-cyclic AMP: step 1/1. Hydrolyzes the second messenger cAMP, which is a key regulator of many important physiological processes. In Rattus norvegicus (Rat), this protein is 3',5'-cyclic-AMP phosphodiesterase 4C.